Consider the following 225-residue polypeptide: Phosphatidylserine decarboxylase proenzyme (225 aa).

Serine 195 serves as the catalytic Schiff-base intermediate with substrate; via pyruvic acid. A Pyruvic acid (Ser); by autocatalysis modification is found at serine 195.

It belongs to the phosphatidylserine decarboxylase family. PSD-A subfamily. Heterodimer of a large membrane-associated beta subunit and a small pyruvoyl-containing alpha subunit. Pyruvate serves as cofactor. Is synthesized initially as an inactive proenzyme. Formation of the active enzyme involves a self-maturation process in which the active site pyruvoyl group is generated from an internal serine residue via an autocatalytic post-translational modification. Two non-identical subunits are generated from the proenzyme in this reaction, and the pyruvate is formed at the N-terminus of the alpha chain, which is derived from the carboxyl end of the proenzyme. The post-translation cleavage follows an unusual pathway, termed non-hydrolytic serinolysis, in which the side chain hydroxyl group of the serine supplies its oxygen atom to form the C-terminus of the beta chain, while the remainder of the serine residue undergoes an oxidative deamination to produce ammonia and the pyruvoyl prosthetic group on the alpha chain.

The protein localises to the cell membrane. The enzyme catalyses a 1,2-diacyl-sn-glycero-3-phospho-L-serine + H(+) = a 1,2-diacyl-sn-glycero-3-phosphoethanolamine + CO2. The protein operates within phospholipid metabolism; phosphatidylethanolamine biosynthesis; phosphatidylethanolamine from CDP-diacylglycerol: step 2/2. Functionally, catalyzes the formation of phosphatidylethanolamine (PtdEtn) from phosphatidylserine (PtdSer). The protein is Phosphatidylserine decarboxylase proenzyme of Gluconacetobacter diazotrophicus (strain ATCC 49037 / DSM 5601 / CCUG 37298 / CIP 103539 / LMG 7603 / PAl5).